Consider the following 379-residue polypeptide: Probable RNA methyltransferase RB6963 (379 aa).

The active-site Proton acceptor is the glutamate 89. One can recognise a Radical SAM core domain in the interval 96–332 (ATGRTTLCVS…VRYSLGNDIE (237 aa)). A disulfide bond links cysteine 103 and cysteine 335. Residues cysteine 110, cysteine 114, and cysteine 117 each coordinate [4Fe-4S] cluster. S-adenosyl-L-methionine contacts are provided by residues 160–161 (GE), serine 192, 215–217 (SLH), and asparagine 291. Cysteine 335 functions as the S-methylcysteine intermediate in the catalytic mechanism.

Belongs to the radical SAM superfamily. RlmN family. [4Fe-4S] cluster is required as a cofactor.

The protein localises to the cytoplasm. The protein is Probable RNA methyltransferase RB6963 of Rhodopirellula baltica (strain DSM 10527 / NCIMB 13988 / SH1).